Reading from the N-terminus, the 380-residue chain is O-phospho-L-seryl-tRNA:Cys-tRNA synthase (380 aa).

Residues 86-87 (AR), Asn192, and 215-217 (SGH) each bind pyridoxal 5'-phosphate. Lys218 is modified (N6-(pyridoxal phosphate)lysine).

Belongs to the SepCysS family. In terms of assembly, homodimer. Interacts with SepRS. It depends on pyridoxal 5'-phosphate as a cofactor.

It catalyses the reaction O-phospho-L-seryl-tRNA(Cys) + hydrogen sulfide + H(+) = L-cysteinyl-tRNA(Cys) + phosphate. Functionally, converts O-phospho-L-seryl-tRNA(Cys) (Sep-tRNA(Cys)) to L-cysteinyl-tRNA(Cys) (Cys-tRNA(Cys)). This Methanococcus maripaludis (strain C5 / ATCC BAA-1333) protein is O-phospho-L-seryl-tRNA:Cys-tRNA synthase.